A 221-amino-acid chain; its full sequence is F-box protein At1g55000 (221 aa).

The 40-residue stretch at 7-46 (DTLIIIFQKLTVADLARASCVCKVWNSVATEDDLVVSAFT) folds into the F-box domain. The LysM domain occupies 74-118 (ISHRICRGDSVTSLAVKYAVQVMDIKRLNNMMSDHGIYSRDRLLI).

Part of a SCF (ASK-cullin-F-box) protein ligase complex. Interacts with SKP1A/ASK1, SKP1B/ASK2, ASK4, ASK11 and ASK13.

The protein operates within protein modification; protein ubiquitination. Its function is as follows. Component of SCF(ASK-cullin-F-box) E3 ubiquitin ligase complexes, which may mediate the ubiquitination and subsequent proteasomal degradation of target proteins. The polypeptide is F-box protein At1g55000 (Arabidopsis thaliana (Mouse-ear cress)).